A 304-amino-acid chain; its full sequence is Sulfate adenylyltransferase subunit 2 (304 aa).

It belongs to the PAPS reductase family. CysD subfamily. As to quaternary structure, heterodimer composed of CysD, the smaller subunit, and CysN.

It catalyses the reaction sulfate + ATP + H(+) = adenosine 5'-phosphosulfate + diphosphate. It functions in the pathway sulfur metabolism; hydrogen sulfide biosynthesis; sulfite from sulfate: step 1/3. In terms of biological role, with CysN forms the ATP sulfurylase (ATPS) that catalyzes the adenylation of sulfate producing adenosine 5'-phosphosulfate (APS) and diphosphate, the first enzymatic step in sulfur assimilation pathway. APS synthesis involves the formation of a high-energy phosphoric-sulfuric acid anhydride bond driven by GTP hydrolysis by CysN coupled to ATP hydrolysis by CysD. This is Sulfate adenylyltransferase subunit 2 from Acinetobacter baumannii (strain SDF).